We begin with the raw amino-acid sequence, 29 residues long: Dermaseptin-J6 (29 aa).

Val29 carries the post-translational modification Valine amide.

Expressed by the skin glands.

Its subcellular location is the secreted. In terms of biological role, has antimicrobial activity. The chain is Dermaseptin-J6 from Phasmahyla jandaia (Jandaia leaf frog).